A 366-amino-acid polypeptide reads, in one-letter code: Homoserine O-acetyltransferase (366 aa).

In terms of domain architecture, AB hydrolase-1 spans 47-349 (NAILICHALS…SGEGHDSFLL (303 aa)). The active-site Nucleophile is S153. R221 is a substrate binding site. Residues D311 and H344 contribute to the active site. D345 serves as a coordination point for substrate.

Belongs to the AB hydrolase superfamily. MetX family. As to quaternary structure, homodimer.

The protein resides in the cytoplasm. It catalyses the reaction L-homoserine + acetyl-CoA = O-acetyl-L-homoserine + CoA. The protein operates within amino-acid biosynthesis; L-methionine biosynthesis via de novo pathway; O-acetyl-L-homoserine from L-homoserine: step 1/1. In terms of biological role, transfers an acetyl group from acetyl-CoA to L-homoserine, forming acetyl-L-homoserine. The chain is Homoserine O-acetyltransferase from Leptospira interrogans serogroup Icterohaemorrhagiae serovar copenhageni (strain Fiocruz L1-130).